Here is a 33-residue protein sequence, read N- to C-terminus: Large ribosomal subunit protein uL24 (33 aa).

Belongs to the universal ribosomal protein uL24 family. In terms of assembly, component of the large ribosomal subunit.

The protein resides in the cytoplasm. Functionally, component of the large ribosomal subunit. The ribosome is a large ribonucleoprotein complex responsible for the synthesis of proteins in the cell. The polypeptide is Large ribosomal subunit protein uL24 (rpl26) (Xenopus laevis (African clawed frog)).